A 134-amino-acid chain; its full sequence is Aspartate 1-decarboxylase (134 aa).

The Schiff-base intermediate with substrate; via pyruvic acid role is filled by Ser-25. Ser-25 is subject to Pyruvic acid (Ser). Thr-57 contributes to the substrate binding site. The active-site Proton donor is Tyr-58. 73–75 serves as a coordination point for substrate; the sequence is GAA.

Belongs to the PanD family. In terms of assembly, heterooctamer of four alpha and four beta subunits. Pyruvate serves as cofactor. Is synthesized initially as an inactive proenzyme, which is activated by self-cleavage at a specific serine bond to produce a beta-subunit with a hydroxyl group at its C-terminus and an alpha-subunit with a pyruvoyl group at its N-terminus.

It is found in the cytoplasm. The catalysed reaction is L-aspartate + H(+) = beta-alanine + CO2. The protein operates within cofactor biosynthesis; (R)-pantothenate biosynthesis; beta-alanine from L-aspartate: step 1/1. Functionally, catalyzes the pyruvoyl-dependent decarboxylation of aspartate to produce beta-alanine. The sequence is that of Aspartate 1-decarboxylase from Mycolicibacterium gilvum (strain PYR-GCK) (Mycobacterium gilvum (strain PYR-GCK)).